The sequence spans 70 residues: Small ribosomal subunit protein bS21 (70 aa).

Positions 43 to 70 (TERKRKAAAAVKRQHKRLRSLTLPPKLY) are disordered. Basic residues predominate over residues 45–61 (RKRKAAAAVKRQHKRLR).

This sequence belongs to the bacterial ribosomal protein bS21 family.

The polypeptide is Small ribosomal subunit protein bS21 (Dechloromonas aromatica (strain RCB)).